Consider the following 361-residue polypeptide: Caffeic acid 3-O-methyltransferase 2 (361 aa).

128–134 contributes to the substrate binding site; sequence MNQDKVL. Residues 160 to 178 form a substrate binding region; it reads AFEYHGTDPRFNKVFNQGM. S-adenosyl-L-methionine-binding residues include Gly-206, Asp-229, Asp-249, Met-250, and Lys-263. Residue His-267 is the Proton acceptor of the active site.

The protein belongs to the class I-like SAM-binding methyltransferase superfamily. Cation-independent O-methyltransferase family. COMT subfamily. As to quaternary structure, homodimer.

The catalysed reaction is (E)-caffeate + S-adenosyl-L-methionine = (E)-ferulate + S-adenosyl-L-homocysteine + H(+). It participates in aromatic compound metabolism; phenylpropanoid biosynthesis. Catalyzes the conversion of caffeic acid to ferulic acid and of 5-hydroxyferulic acid to sinapic acid. The resulting products may subsequently be converted to the corresponding alcohols that are incorporated into lignins. The protein is Caffeic acid 3-O-methyltransferase 2 (COMT2) of Ocimum basilicum (Sweet basil).